Consider the following 103-residue polypeptide: L-rhamnose-binding lectin ELEL-1 (103 aa).

An SUEL-type lectin domain is found at 13 to 102; the sequence is VCEGSSLTIS…KYLELSYDCS (90 aa). Intrachain disulfides connect C14–C45, C23–C101, C56–C88, and C69–C75.

In terms of assembly, homodimer; disulfide-linked. In terms of processing, not glycosylated.

Rhamnose-binding lectin. Also binds alpha-D-melibiose, alpha-D-lactose, beta-D-lactose, methyl-alpha-D-galactopyranoside, methyl-beta-D--galactopyranoside and D-galactose but not D-arabinose, L-fucose, D-glucose, D-mannose, D-maltose, D-sucrose, N-acetyl-D-galactosamine, N-acetyl-D-glucosamine, N-acetyl-D-mannosamine-D-xylose or by glycoproteins orosomucoid, thyroglobulin, ovomucoid and porcine stomach mucin. Shows cation-independent hemagglutinating activity against rabbit and human erythrocytes. Agglutinates cells of Gram-positive bacterial species S.aureus but not those of Gram-negative E.coli. This chain is L-rhamnose-binding lectin ELEL-1, found in Echinometra lucunter (Rock-boring urchin).